Here is a 541-residue protein sequence, read N- to C-terminus: Synaptotagmin-1 (541 aa).

Over 1–11 (MGFFSTILGFC) the chain is Extracellular. Residues 12–32 (GFGVGISLGLVIGYVLFVYLL) form a helical membrane-spanning segment. The Cytoplasmic portion of the chain corresponds to 33 to 541 (PNDVKDPEIR…QIELEWRTAS (509 aa)). In terms of domain architecture, SMP-LTD spans 67-249 (DFDRVDWINR…WPKTLVVPIL (183 aa)). Residues 227–509 (QEQIKDQVAN…TLGYVDIPVV (283 aa)) form a phospholipid binding region. 2 C2 domains span residues 240–362 (WPKT…AFTL) and 401–521 (GFEE…NQKF). Ca(2+)-binding residues include D276, D282, D332, and E334.

The protein belongs to the synaptotagmin family. In terms of assembly, interacts with cabbage leaf curl virus (CaLCuV) BC1 protein and tobacco mosaic virus (TMV) MP protein. Interacts with ROSY1. Ca(2+) serves as cofactor. Expressed in roots, shoots, rosette and cauline leaves, inflorescences, and siliques. In roots, expressed in vascular bundle, epidermis, the differential zone of the tips of root hairs, and the quiescent center and columella of root tips.

The protein localises to the cell membrane. The protein resides in the endosome membrane. Plays an important role in maintaining plasma membrane integrity during freezing and osmotic stresses. May function in membrane resealing during calcium-dependent freezing tolerance. May regulate endocytosis and endosome recycling at the plasma membrane and cell-to-cell trafficking of cabbage leaf curl virus (CaLCuV) and tobacco mosaic virus (TMV) movement proteins via plasmodesmata. In Arabidopsis thaliana (Mouse-ear cress), this protein is Synaptotagmin-1 (SYT1).